Here is a 959-residue protein sequence, read N- to C-terminus: Translation initiation factor IF-2 (959 aa).

The span at 1-10 (MSDKTNDDKT) shows a compositional bias: basic and acidic residues. Residues 1–374 (MSDKTNDDKT…SQMQETREKI (374 aa)) form a disordered region. A compositionally biased stretch (polar residues) spans 27-37 (EQSTVRQNFSH). Low complexity-rich tracts occupy residues 63 to 118 (AAAA…VTKP) and 128 to 138 (QRPGGQQAQRP). 2 stretches are compositionally biased toward basic and acidic residues: residues 154-225 (SEMD…EAAK) and 232-241 (ARSERRDDAR). A compositionally biased stretch (low complexity) spans 246 to 284 (GARPQQAGRPQGGRPQPAGRPQQGSPRPAPIIADAAPIA). Residues 318-333 (PEVRAPKVVKGEDDRR) are compositionally biased toward basic and acidic residues. In terms of domain architecture, tr-type G spans 457-626 (SRPPVVTIMG…LLQAEMLDLK (170 aa)). Residues 466–473 (GHVDHGKT) are G1. 466–473 (GHVDHGKT) serves as a coordination point for GTP. Residues 491–495 (GITQH) are G2. The segment at 512–515 (DTPG) is G3. GTP contacts are provided by residues 512 to 516 (DTPGH) and 566 to 569 (NKID). Residues 566 to 569 (NKID) form a G4 region. Residues 602-604 (SAK) form a G5 region.

It belongs to the TRAFAC class translation factor GTPase superfamily. Classic translation factor GTPase family. IF-2 subfamily.

It is found in the cytoplasm. In terms of biological role, one of the essential components for the initiation of protein synthesis. Protects formylmethionyl-tRNA from spontaneous hydrolysis and promotes its binding to the 30S ribosomal subunits. Also involved in the hydrolysis of GTP during the formation of the 70S ribosomal complex. The sequence is that of Translation initiation factor IF-2 from Brucella suis biovar 1 (strain 1330).